A 104-amino-acid polypeptide reads, in one-letter code: Large ribosomal subunit protein uL24 (104 aa).

The protein belongs to the universal ribosomal protein uL24 family. As to quaternary structure, part of the 50S ribosomal subunit.

Functionally, one of two assembly initiator proteins, it binds directly to the 5'-end of the 23S rRNA, where it nucleates assembly of the 50S subunit. Its function is as follows. One of the proteins that surrounds the polypeptide exit tunnel on the outside of the subunit. In Flavobacterium psychrophilum (strain ATCC 49511 / DSM 21280 / CIP 103535 / JIP02/86), this protein is Large ribosomal subunit protein uL24.